The chain runs to 763 residues: Transferrin receptor protein 1 (763 aa).

The Cytoplasmic portion of the chain corresponds to 1-67 (MMDQARSAFS…KPKRFNGRLC (67 aa)). The tract at residues 1-67 (MMDQARSAFS…KPKRFNGRLC (67 aa)) is mediates interaction with SH3BP4. A phosphoserine mark is found at S10 and S19. At Y20 the chain carries Phosphotyrosine. The Endocytosis signal motif lies at 20–23 (YTRF). At T21 the chain carries Phosphothreonine. The residue at position 24 (S24) is a Phosphoserine. The short motif at 58–61 (KPKR) is the Stop-transfer sequence element. Residue C67 is the site of S-palmitoyl cysteine attachment. A helical; Signal-anchor for type II membrane protein transmembrane segment spans residues 68–88 (FAAIALVIFFLIGFMSGYLGY). Over 89–763 (CKRVEQKEEC…GDIWNIDNEF (675 aa)) the chain is Extracellular. T104 carries O-linked (GalNAc...) threonine glycosylation. One can recognise a PA domain in the interval 225-315 (SKPTEVSGKL…GTGDPYTPGF (91 aa)). N-linked (GlcNAc...) asparagine glycans are attached at residues N253 and N319. Residues 572 to 763 (RLDTYEALTQ…GDIWNIDNEF (192 aa)) form a ligand-binding region. A Cell attachment site motif is present at residues 649 to 651 (RGD). N-linked (GlcNAc...) asparagine glycans are attached at residues N725 and N730.

This sequence belongs to the peptidase M28 family. M28B subfamily. In terms of assembly, homodimer; disulfide-linked. Binds one transferrin molecule per subunit. Interacts with SH3BP4. Interacts with STEAP3; facilitates TFRC endocytosis in erythroid precursor cells. Stearoylated by ZDHHC6 which inhibits TFRC-mediated activation of the JNK pathway and promotes mitochondrial fragmentation. Stearoylation does not affect iron uptake. Post-translationally, N- and O-glycosylated, phosphorylated and palmitoylated.

Its subcellular location is the cell membrane. It is found in the melanosome. Its function is as follows. Cellular uptake of iron occurs via receptor-mediated endocytosis of ligand-occupied transferrin receptor into specialized endosomes. Endosomal acidification leads to iron release. The apotransferrin-receptor complex is then recycled to the cell surface with a return to neutral pH and the concomitant loss of affinity of apotransferrin for its receptor. Transferrin receptor is necessary for development of erythrocytes and the nervous system. Upon stimulation, positively regulates T and B cell proliferation through iron uptake. Acts as a lipid sensor that regulates mitochondrial fusion by regulating activation of the JNK pathway. When dietary levels of stearate (C18:0) are low, promotes activation of the JNK pathway, resulting in HUWE1-mediated ubiquitination and subsequent degradation of the mitofusin MFN2 and inhibition of mitochondrial fusion. When dietary levels of stearate (C18:0) are high, TFRC stearoylation inhibits activation of the JNK pathway and thus degradation of the mitofusin MFN2. Mediates uptake of NICOL1 into fibroblasts where it may regulate extracellular matrix production. In Mus musculus (Mouse), this protein is Transferrin receptor protein 1 (Tfrc).